Here is a 102-residue protein sequence, read N- to C-terminus: Keratin-associated protein 25-1 (102 aa).

It belongs to the PMG family. In terms of assembly, interacts with hair keratins.

Its function is as follows. In the hair cortex, hair keratin intermediate filaments are embedded in an interfilamentous matrix, consisting of hair keratin-associated proteins (KRTAP), which are essential for the formation of a rigid and resistant hair shaft through their extensive disulfide bond cross-linking with abundant cysteine residues of hair keratins. The matrix proteins include the high-sulfur and high-glycine-tyrosine keratins. This is Keratin-associated protein 25-1 (KRTAP25-1) from Homo sapiens (Human).